A 70-amino-acid polypeptide reads, in one-letter code: Cold shock-like protein CspB (70 aa).

The CSD domain occupies 7-67; the sequence is GLVKWFDAGK…GQKGPSAVNV (61 aa).

The protein localises to the cytoplasm. This chain is Cold shock-like protein CspB (cspB), found in Yersinia enterocolitica.